The chain runs to 279 residues: MNYNDKSLSALKLGQKTEYKSEYDPTLLQPVPRKLNRDGLGITEQQPFDRGADVWTCYELSWLNENGLPQVAIADVAIDFRSENLIESKSFKLYLNSFNQTKFASLEQVEQTLAKDLSQCASGQVSVKVYKLSAYTQQPIVDFAGECIDEQDIQIDSYEFSNEHLASVAEGEVVEETLVSHLLKSNCLITSQPDWGSVQIHYVGKKLNREKLLRYLVSFREHNEFHEQCVERIFTDLIQFTQPEKLTVYARYTRRGGLDINPFRSNFESVPQNLRMARQ.

Position 86-88 (86-88 (IES)) interacts with substrate. Residue 88 to 89 (SK) coordinates NADPH. The active-site Thioimide intermediate is the Cys-187. Asp-194 (proton donor) is an active-site residue. 226 to 227 (HE) is a binding site for substrate. Position 255–256 (255–256 (RG)) interacts with NADPH.

It belongs to the GTP cyclohydrolase I family. QueF type 2 subfamily. Homodimer.

Its subcellular location is the cytoplasm. The enzyme catalyses 7-aminomethyl-7-carbaguanine + 2 NADP(+) = 7-cyano-7-deazaguanine + 2 NADPH + 3 H(+). It functions in the pathway tRNA modification; tRNA-queuosine biosynthesis. Functionally, catalyzes the NADPH-dependent reduction of 7-cyano-7-deazaguanine (preQ0) to 7-aminomethyl-7-deazaguanine (preQ1). The chain is NADPH-dependent 7-cyano-7-deazaguanine reductase from Actinobacillus pleuropneumoniae serotype 7 (strain AP76).